Here is a 91-residue protein sequence, read N- to C-terminus: MARICLHAYVGGRVQGVGFRQSTRDEAERLGLDGWVRNLEDGRVEVLWEGEEEQVKALQRWLERGPRRARVAGVEVEALPLQGIAGFIVRR.

Positions 5–91 constitute an Acylphosphatase-like domain; that stretch reads CLHAYVGGRV…QGIAGFIVRR (87 aa). Residues R20 and N38 contribute to the active site.

Belongs to the acylphosphatase family.

It catalyses the reaction an acyl phosphate + H2O = a carboxylate + phosphate + H(+). In Pseudomonas paraeruginosa (strain DSM 24068 / PA7) (Pseudomonas aeruginosa (strain PA7)), this protein is Acylphosphatase (acyP).